Consider the following 545-residue polypeptide: Chaperonin GroEL 1 (545 aa).

Residues 30–33, lysine 51, 87–91, glycine 415, 479–481, and aspartate 495 each bind ATP; these read TLGP, DGTTT, and NAA.

This sequence belongs to the chaperonin (HSP60) family. Forms a cylinder of 14 subunits composed of two heptameric rings stacked back-to-back. Interacts with the co-chaperonin GroES.

It is found in the cytoplasm. The enzyme catalyses ATP + H2O + a folded polypeptide = ADP + phosphate + an unfolded polypeptide.. Its function is as follows. Together with its co-chaperonin GroES, plays an essential role in assisting protein folding. The GroEL-GroES system forms a nano-cage that allows encapsulation of the non-native substrate proteins and provides a physical environment optimized to promote and accelerate protein folding. This is Chaperonin GroEL 1 from Methylococcus capsulatus (strain ATCC 33009 / NCIMB 11132 / Bath).